The sequence spans 182 residues: Dual-action ribosomal maturation protein DarP (182 aa).

It belongs to the DarP family.

The protein localises to the cytoplasm. Functionally, member of a network of 50S ribosomal subunit biogenesis factors which assembles along the 30S-50S interface, preventing incorrect 23S rRNA structures from forming. Promotes peptidyl transferase center (PTC) maturation. This Yersinia pseudotuberculosis serotype O:1b (strain IP 31758) protein is Dual-action ribosomal maturation protein DarP.